The primary structure comprises 328 residues: Malate dehydrogenase (328 aa).

11-17 (GAAGQIG) provides a ligand contact to NAD(+). Positions 94 and 100 each coordinate substrate. NAD(+)-binding positions include Asn-107, Gln-114, and 131–133 (VGN). Substrate-binding residues include Asn-133 and Arg-164. The active-site Proton acceptor is the His-189.

This sequence belongs to the LDH/MDH superfamily. MDH type 2 family.

It carries out the reaction (S)-malate + NAD(+) = oxaloacetate + NADH + H(+). Catalyzes the reversible oxidation of malate to oxaloacetate. The chain is Malate dehydrogenase from Xanthomonas oryzae pv. oryzae (strain MAFF 311018).